A 228-amino-acid polypeptide reads, in one-letter code: Immunogenic protein MPB64 (228 aa).

An N-terminal signal peptide occupies residues 1–23; the sequence is MRIKIFMLVTAVVLLCCSGVATA.

It belongs to the RsiV family.

It localises to the secreted. The polypeptide is Immunogenic protein MPB64 (mpb64) (Mycobacterium bovis (strain ATCC BAA-935 / AF2122/97)).